Reading from the N-terminus, the 317-residue chain is Ribose-phosphate pyrophosphokinase (317 aa).

Residues 41-43 (DME) and 100-101 (RQ) each bind ATP. 2 residues coordinate Mg(2+): His134 and Asp174. Lys197 is a catalytic residue. D-ribose 5-phosphate is bound by residues Arg199, Asp223, and 227 to 231 (DSGGT).

The protein belongs to the ribose-phosphate pyrophosphokinase family. Class I subfamily. As to quaternary structure, homohexamer. The cofactor is Mg(2+).

It localises to the cytoplasm. It catalyses the reaction D-ribose 5-phosphate + ATP = 5-phospho-alpha-D-ribose 1-diphosphate + AMP + H(+). It functions in the pathway metabolic intermediate biosynthesis; 5-phospho-alpha-D-ribose 1-diphosphate biosynthesis; 5-phospho-alpha-D-ribose 1-diphosphate from D-ribose 5-phosphate (route I): step 1/1. Its function is as follows. Involved in the biosynthesis of the central metabolite phospho-alpha-D-ribosyl-1-pyrophosphate (PRPP) via the transfer of pyrophosphoryl group from ATP to 1-hydroxyl of ribose-5-phosphate (Rib-5-P). In Bradyrhizobium diazoefficiens (strain JCM 10833 / BCRC 13528 / IAM 13628 / NBRC 14792 / USDA 110), this protein is Ribose-phosphate pyrophosphokinase.